Here is a 412-residue protein sequence, read N- to C-terminus: Peptidase T (412 aa).

H81 contributes to the Zn(2+) binding site. The active site involves D83. D144 contributes to the Zn(2+) binding site. Catalysis depends on E178, which acts as the Proton acceptor. Residues E179, D201, and H383 each coordinate Zn(2+).

Belongs to the peptidase M20B family. Requires Zn(2+) as cofactor.

Its subcellular location is the cytoplasm. It catalyses the reaction Release of the N-terminal residue from a tripeptide.. Functionally, cleaves the N-terminal amino acid of tripeptides. The chain is Peptidase T from Bacillus cereus (strain ATCC 14579 / DSM 31 / CCUG 7414 / JCM 2152 / NBRC 15305 / NCIMB 9373 / NCTC 2599 / NRRL B-3711).